Reading from the N-terminus, the 385-residue chain is dTDP-4-dehydro-2,3,6-trideoxy-D-glucose 4-aminotransferase (385 aa).

Lys-182 bears the N6-(pyridoxal phosphate)lysine mark.

The protein belongs to the DegT/DnrJ/EryC1 family. As to quaternary structure, homodimer. It depends on pyridoxal 5'-phosphate as a cofactor.

It carries out the reaction dTDP-4-amino-2,3,4,6-tetradeoxy-alpha-D-erythro-hexopyranose + 2-oxoglutarate = dTDP-4-dehydro-2,3,6-trideoxy-alpha-D-hexopyranose + L-glutamate. Involved in the biosynthesis of forosamine ((4-dimethylamino)-2,3,4,6-tetradeoxy-alpha-D-threo-hexopyranose), a highly deoxygenated sugar component of several bioactive natural products such as the insecticidal spinosyns A and D. In the presence of pyridoxal 5'-phosphate (PLP) and alpha-ketoglutarate, catalyzes the C-4 transamination of dTDP-4-keto-2,3,6-trideoxy-alpha-D-glucose to yield dTDP-4-amino-2,3,4,6-tetradeoxy-alpha-D-glucose. It can also use pyruvate, but less efficiently than alpha-ketoglutarate. Also able to catalyze the C-4 transamination of dTDP-4-keto-2,6-dideoxy-alpha-D-glucose to yield dTDP-4-amino-2,4,6-trideoxy-D-glucose. This is dTDP-4-dehydro-2,3,6-trideoxy-D-glucose 4-aminotransferase from Saccharopolyspora spinosa.